We begin with the raw amino-acid sequence, 360 residues long: Histidinol-phosphate aminotransferase (360 aa).

K222 is modified (N6-(pyridoxal phosphate)lysine).

It belongs to the class-II pyridoxal-phosphate-dependent aminotransferase family. Histidinol-phosphate aminotransferase subfamily. Requires pyridoxal 5'-phosphate as cofactor.

The catalysed reaction is L-histidinol phosphate + 2-oxoglutarate = 3-(imidazol-4-yl)-2-oxopropyl phosphate + L-glutamate. The protein operates within amino-acid biosynthesis; L-histidine biosynthesis; L-histidine from 5-phospho-alpha-D-ribose 1-diphosphate: step 7/9. The sequence is that of Histidinol-phosphate aminotransferase from Haloarcula marismortui (strain ATCC 43049 / DSM 3752 / JCM 8966 / VKM B-1809) (Halobacterium marismortui).